A 396-amino-acid chain; its full sequence is Tryptophan synthase beta chain (396 aa).

The residue at position 86 (lysine 86) is an N6-(pyridoxal phosphate)lysine.

The protein belongs to the TrpB family. Tetramer of two alpha and two beta chains. Pyridoxal 5'-phosphate is required as a cofactor.

The catalysed reaction is (1S,2R)-1-C-(indol-3-yl)glycerol 3-phosphate + L-serine = D-glyceraldehyde 3-phosphate + L-tryptophan + H2O. Its pathway is amino-acid biosynthesis; L-tryptophan biosynthesis; L-tryptophan from chorismate: step 5/5. The beta subunit is responsible for the synthesis of L-tryptophan from indole and L-serine. This is Tryptophan synthase beta chain from Proteus mirabilis (strain HI4320).